The following is a 347-amino-acid chain: N-acetyl-gamma-glutamyl-phosphate reductase (347 aa).

The active site involves Cys-152.

It belongs to the NAGSA dehydrogenase family. Type 1 subfamily.

It is found in the cytoplasm. The catalysed reaction is N-acetyl-L-glutamate 5-semialdehyde + phosphate + NADP(+) = N-acetyl-L-glutamyl 5-phosphate + NADPH + H(+). It functions in the pathway amino-acid biosynthesis; L-arginine biosynthesis; N(2)-acetyl-L-ornithine from L-glutamate: step 3/4. Functionally, catalyzes the NADPH-dependent reduction of N-acetyl-5-glutamyl phosphate to yield N-acetyl-L-glutamate 5-semialdehyde. The polypeptide is N-acetyl-gamma-glutamyl-phosphate reductase (Neisseria meningitidis serogroup A / serotype 4A (strain DSM 15465 / Z2491)).